Reading from the N-terminus, the 554-residue chain is Urocanate hydratase (554 aa).

NAD(+)-binding positions include 52–53 (GG), Gln130, 176–178 (GMG), Glu196, Arg201, 242–243 (NA), 263–267 (QTSAH), 273–274 (YL), and Tyr322. Residue Cys410 is part of the active site. Position 492 (Gly492) interacts with NAD(+).

Belongs to the urocanase family. Requires NAD(+) as cofactor.

The protein localises to the cytoplasm. The catalysed reaction is 4-imidazolone-5-propanoate = trans-urocanate + H2O. It participates in amino-acid degradation; L-histidine degradation into L-glutamate; N-formimidoyl-L-glutamate from L-histidine: step 2/3. In terms of biological role, catalyzes the conversion of urocanate to 4-imidazolone-5-propionate. The protein is Urocanate hydratase of Shewanella halifaxensis (strain HAW-EB4).